The sequence spans 111 residues: Urease subunit beta (111 aa).

This sequence belongs to the urease beta subunit family. As to quaternary structure, heterotrimer of UreA (gamma), UreB (beta) and UreC (alpha) subunits. Three heterotrimers associate to form the active enzyme.

It is found in the cytoplasm. The catalysed reaction is urea + 2 H2O + H(+) = hydrogencarbonate + 2 NH4(+). Its pathway is nitrogen metabolism; urea degradation; CO(2) and NH(3) from urea (urease route): step 1/1. In Psychrobacter cryohalolentis (strain ATCC BAA-1226 / DSM 17306 / VKM B-2378 / K5), this protein is Urease subunit beta.